Consider the following 317-residue polypeptide: Acetyl-coenzyme A carboxylase carboxyl transferase subunit alpha (317 aa).

A CoA carboxyltransferase C-terminal domain is found at 39 to 293 (RLKKKSISLT…KTSLAQGVAE (255 aa)).

This sequence belongs to the AccA family. Acetyl-CoA carboxylase is a heterohexamer composed of biotin carboxyl carrier protein (AccB), biotin carboxylase (AccC) and two subunits each of ACCase subunit alpha (AccA) and ACCase subunit beta (AccD).

It localises to the cytoplasm. It catalyses the reaction N(6)-carboxybiotinyl-L-lysyl-[protein] + acetyl-CoA = N(6)-biotinyl-L-lysyl-[protein] + malonyl-CoA. It participates in lipid metabolism; malonyl-CoA biosynthesis; malonyl-CoA from acetyl-CoA: step 1/1. Functionally, component of the acetyl coenzyme A carboxylase (ACC) complex. First, biotin carboxylase catalyzes the carboxylation of biotin on its carrier protein (BCCP) and then the CO(2) group is transferred by the carboxyltransferase to acetyl-CoA to form malonyl-CoA. This chain is Acetyl-coenzyme A carboxylase carboxyl transferase subunit alpha, found in Marinobacter nauticus (strain ATCC 700491 / DSM 11845 / VT8) (Marinobacter aquaeolei).